Reading from the N-terminus, the 261-residue chain is Short-chain dehydrogenase/reductase AFUA_1G00990 (261 aa).

NADP(+) is bound by residues leucine 19, aspartate 67, asparagine 94, tyrosine 169, lysine 173, and threonine 213. The active-site Proton donor is tyrosine 169. The active-site Lowers pKa of active site Tyr is lysine 173.

This sequence belongs to the short-chain dehydrogenases/reductases (SDR) family.

Short-chain dehydrogenase/reductase; part of the gene cluster that mediates the biosynthesis of fumigermin that inhibits germination of spores of the inducing S.rapamycinicus, and thus helps the fungus to defend resources in the shared habitat against a bacterial competitor. The partially reducing polyketide synthase fngA alone is sufficient for the production of fumigermin. FgnA catalyzes the condensation of 3 malonyl-CoA units to an acetyl-CoA starter, and 3 methylations to yield fumigermin. It is remarkable that the five cluster genes including fgnA are conserved in distantly related fungi, supporting the assumption of a fumigermin cluster; it is thus possible that originally all five genes were functional, but that the genes encoding tailoring enzymes became inactive from mutations, similar to the case of the fgnA gene in strains A1163 and Af293. The polypeptide is Short-chain dehydrogenase/reductase AFUA_1G00990 (Aspergillus fumigatus (strain ATCC MYA-4609 / CBS 101355 / FGSC A1100 / Af293) (Neosartorya fumigata)).